A 363-amino-acid chain; its full sequence is Fructose-bisphosphate aldolase, muscle type (363 aa).

Substrate is bound by residues Arg-56 and Lys-147. The active-site Schiff-base intermediate with dihydroxyacetone-P is Lys-230.

The protein belongs to the class I fructose-bisphosphate aldolase family. Homotetramer. Expressed mainly in the skeletal muscle, heart muscle, brain, and some other tissues, but probably not in liver.

It catalyses the reaction beta-D-fructose 1,6-bisphosphate = D-glyceraldehyde 3-phosphate + dihydroxyacetone phosphate. The protein operates within carbohydrate degradation; glycolysis; D-glyceraldehyde 3-phosphate and glycerone phosphate from D-glucose: step 4/4. This Lethenteron camtschaticum (Japanese lamprey) protein is Fructose-bisphosphate aldolase, muscle type.